The sequence spans 400 residues: Methylthioribose kinase (400 aa).

Residues Asn44, Lys61, and 115 to 117 (EDL) each bind ATP. Asp233 contributes to the substrate binding site. 250–252 (DPE) provides a ligand contact to ATP. Arg340 contacts substrate.

This sequence belongs to the methylthioribose kinase family. In terms of assembly, homodimer.

The catalysed reaction is 5-(methylsulfanyl)-D-ribose + ATP = 5-(methylsulfanyl)-alpha-D-ribose 1-phosphate + ADP + H(+). Its pathway is amino-acid biosynthesis; L-methionine biosynthesis via salvage pathway; S-methyl-5-thio-alpha-D-ribose 1-phosphate from S-methyl-5'-thioadenosine (hydrolase route): step 2/2. In terms of biological role, catalyzes the phosphorylation of methylthioribose into methylthioribose-1-phosphate. The sequence is that of Methylthioribose kinase from Geobacillus sp. (strain WCH70).